The following is a 404-amino-acid chain: Zinc finger CCCH domain-containing protein 15 homolog (404 aa).

Pro residues predominate over residues 1–10 (MPPKKAPPGP). A disordered region spans residues 1–71 (MPPKKAPPGP…KRKEEKEKKL (71 aa)). Basic and acidic residues predominate over residues 12–28 (KKTEQKKKEKVIEDKTF). Residues 38–50 (QQKFIQQVQKQVQ) are compositionally biased toward low complexity. The segment covering 56 to 71 (PRQDGDKRKEEKEKKL) has biased composition (basic and acidic residues). C3H1-type zinc fingers lie at residues 94 to 121 (DPKS…HDLS) and 165 to 202 (PTTD…HALP). A Phosphothreonine modification is found at T218. S221 is modified (phosphoserine). Residues 246–270 (LAWKKRKIAEKKAKLAAEEERKKSD) are a coiled coil. Low complexity-rich tracts occupy residues 352 to 361 (EAAKTAAAED) and 369 to 380 (PSSSAPANDAAP). The disordered stretch occupies residues 352-380 (EAAKTAAAEDAAADEDGPSSSAPANDAAP).

Belongs to the ZC3H15/TMA46 family.

This chain is Zinc finger CCCH domain-containing protein 15 homolog, found in Drosophila melanogaster (Fruit fly).